Here is a 164-residue protein sequence, read N- to C-terminus: Cytochrome c-type biogenesis protein CcmE (164 aa).

Residues 1–8 are Cytoplasmic-facing; the sequence is MNPRRKKR. A helical; Signal-anchor for type II membrane protein membrane pass occupies residues 9–29; it reads LTLAVALIGGVAAIASLLLYA. Residues 30-164 lie on the Periplasmic side of the membrane; the sequence is LNSNLNLFFT…EDQSKAGGYK (135 aa). The heme site is built by H131 and Y135. The tract at residues 140 to 164 is disordered; the sequence is VAEAMGQSHEKLDYSEDQSKAGGYK. Over residues 147–158 the composition is skewed to basic and acidic residues; sequence SHEKLDYSEDQS.

This sequence belongs to the CcmE/CycJ family.

Its subcellular location is the cell inner membrane. In terms of biological role, heme chaperone required for the biogenesis of c-type cytochromes. Transiently binds heme delivered by CcmC and transfers the heme to apo-cytochromes in a process facilitated by CcmF and CcmH. The polypeptide is Cytochrome c-type biogenesis protein CcmE (Shewanella piezotolerans (strain WP3 / JCM 13877)).